Reading from the N-terminus, the 65-residue chain is DNA gyrase inhibitor YacG (65 aa).

The Zn(2+) site is built by C9, C12, C28, and C32. Residues 45 to 65 (KRIPSSGDLSESDDWSEEPKQ) are disordered. Residues 54-65 (SESDDWSEEPKQ) are compositionally biased toward acidic residues.

This sequence belongs to the DNA gyrase inhibitor YacG family. Interacts with GyrB. Zn(2+) is required as a cofactor.

Functionally, inhibits all the catalytic activities of DNA gyrase by preventing its interaction with DNA. Acts by binding directly to the C-terminal domain of GyrB, which probably disrupts DNA binding by the gyrase. The chain is DNA gyrase inhibitor YacG from Shigella boydii serotype 18 (strain CDC 3083-94 / BS512).